Here is a 115-residue protein sequence, read N- to C-terminus: Putative septation protein SpoVG (115 aa).

The disordered stretch occupies residues 88 to 115; that stretch reads PGTIATSEVSSQLEESDSDKTLSEDLKA. Over residues 91 to 100 the composition is skewed to polar residues; sequence IATSEVSSQL. The segment covering 105-115 has biased composition (basic and acidic residues); the sequence is SDKTLSEDLKA.

The protein belongs to the SpoVG family.

Its function is as follows. Could be involved in septation. In Macrococcus caseolyticus (strain JCSC5402) (Macrococcoides caseolyticum), this protein is Putative septation protein SpoVG.